The sequence spans 490 residues: MTQGKKKKRAANRSIMLAKKIIIKDGGTPQGIGSPSVYHAVIVIFLEFFAWGLLTAPTLVVLHETFPKHTFLMNGLIQGVKGLLSFLSAPLIGALSDVWGRKSFLLLTVFFTCAPIPLMKISPWWYFAVISVSGVFAVTFSVVFAYVADITQEHERSMAYGLVSATFAASLVTSPAIGAYLGRVYGDSLVVVLATAIALLDICFILVAVPESLPEKMRPASWGAPISWEQADPFASLKKVGQDSIVLLICITVFLSYLPEAGQYSSFFLYLRQIMKFSPESVAAFIAVLGILSIIAQTIVLSLLMRSIGNKNTILLGLGFQILQLAWYGFGSEPWMMWAAGAVAAMSSITFPAVSALVSRTADADQQGVVQGMITGIRGLCNGLGPALYGFIFYIFHVELKELPITGTDLGTNTSPQHHFEQNSIIPGPPFLFGACSVLLALLVALFIPEHTNLSLRSSSWRKHCGSHSHPHNTQAPGEAKEPLLQDTNV.

Met-1 bears the N-acetylmethionine mark. At 1-40 the chain is on the extracellular side; sequence MTQGKKKKRAANRSIMLAKKIIIKDGGTPQGIGSPSVYHA. Asn-12 is a glycosylation site (N-linked (GlcNAc...) asparagine). The helical transmembrane segment at 41–61 threads the bilayer; the sequence is VIVIFLEFFAWGLLTAPTLVV. Residues 62–74 lie on the Cytoplasmic side of the membrane; the sequence is LHETFPKHTFLMN. A helical membrane pass occupies residues 75–95; that stretch reads GLIQGVKGLLSFLSAPLIGAL. Residues 96 to 103 lie on the Extracellular side of the membrane; the sequence is SDVWGRKS. A helical transmembrane segment spans residues 104–124; the sequence is FLLLTVFFTCAPIPLMKISPW. Over 125 to 126 the chain is Cytoplasmic; the sequence is WY. A helical membrane pass occupies residues 127–147; that stretch reads FAVISVSGVFAVTFSVVFAYV. Over 148-160 the chain is Extracellular; it reads ADITQEHERSMAY. Residues 161 to 181 form a helical membrane-spanning segment; sequence GLVSATFAASLVTSPAIGAYL. Topologically, residues 182 to 188 are cytoplasmic; sequence GRVYGDS. The chain crosses the membrane as a helical span at residues 189-209; sequence LVVVLATAIALLDICFILVAV. The Extracellular segment spans residues 210 to 243; the sequence is PESLPEKMRPASWGAPISWEQADPFASLKKVGQD. The helical transmembrane segment at 244–264 threads the bilayer; the sequence is SIVLLICITVFLSYLPEAGQY. Over 265-284 the chain is Cytoplasmic; that stretch reads SSFFLYLRQIMKFSPESVAA. A helical transmembrane segment spans residues 285–305; it reads FIAVLGILSIIAQTIVLSLLM. Topologically, residues 306–313 are extracellular; sequence RSIGNKNT. A helical membrane pass occupies residues 314–334; that stretch reads ILLGLGFQILQLAWYGFGSEP. At 335–337 the chain is on the cytoplasmic side; sequence WMM. Residues 338–358 traverse the membrane as a helical segment; it reads WAAGAVAAMSSITFPAVSALV. Residues 359-379 lie on the Extracellular side of the membrane; that stretch reads SRTADADQQGVVQGMITGIRG. A helical membrane pass occupies residues 380 to 400; it reads LCNGLGPALYGFIFYIFHVEL. Topologically, residues 401 to 427 are cytoplasmic; it reads KELPITGTDLGTNTSPQHHFEQNSIIP. Residues 428-448 traverse the membrane as a helical segment; it reads GPPFLFGACSVLLALLVALFI. Residues 449–490 lie on the Extracellular side of the membrane; that stretch reads PEHTNLSLRSSSWRKHCGSHSHPHNTQAPGEAKEPLLQDTNV. Asn-453 carries an N-linked (GlcNAc...) asparagine glycan. The segment at 465–490 is disordered; the sequence is CGSHSHPHNTQAPGEAKEPLLQDTNV.

It belongs to the major facilitator superfamily.

It is found in the membrane. This Homo sapiens (Human) protein is Hippocampus abundant transcript 1 protein.